The chain runs to 1321 residues: Bile salt export pump (1321 aa).

Over 1-62 (MSDSVILRSV…FSSSKDIWLM (62 aa)) the chain is Cytoplasmic. The ABC transmembrane type-1 1 domain maps to 62–385 (MLMGGVCALL…ASSCLEIFST (324 aa)). The chain crosses the membrane as a helical span at residues 63–83 (LMGGVCALLHGMAQPGILIIF). At 84-147 (GIMTDIFIKY…MIKFSGIYAG (64 aa)) the chain is on the extracellular side. N109, N116, N122, and N125 each carry an N-linked (GlcNAc...) asparagine glycan. The chain crosses the membrane as a helical span at residues 148-168 (VGMTVLILGYFQIRLWVITGA). Topologically, residues 169 to 215 (RQIRRMRKIYFRRIMRMEIGWFDCTSVGELNSRFADDIEKINDAIAD) are cytoplasmic. A helical membrane pass occupies residues 216 to 236 (QLAHFLQRMSTAMCGLLLGFY). Residues 237–240 (RGWK) are Extracellular-facing. The chain crosses the membrane as a helical span at residues 241–261 (LTLVILAVSPLIGIGAAVIGL). Residues 262–319 (SIAKFTELELKAYAKAGSIADEVLSSIRTVAAFGGENKEVERYEKNLVFAQRWGIWKG) lie on the Cytoplasmic side of the membrane. Residues 320 to 340 (MVMGFFTGYMWCLIFFCYALA) traverse the membrane as a helical segment. Topologically, residues 341–353 (FWYGSTLVLDEEE) are extracellular. The helical transmembrane segment at 354-374 (YTPGTLVQIFLCVILAAMNIG) threads the bilayer. Topologically, residues 375 to 755 (HASSCLEIFS…KYNIPEWHYI (381 aa)) are cytoplasmic. An ABC transporter 1 domain is found at 420-656 (IEFHNVTFHY…KGVYFMLVTL (237 aa)). 455–462 (GSSGAGKS) serves as a coordination point for ATP. T586 bears the Phosphothreonine mark. Residue S587 is modified to Phosphoserine. The tract at residues 651–674 (FMLVTLQSQGDNAHKETSIMGKDA) is interaction with HAX1. S692, S703, and S706 each carry phosphoserine. The region spanning 755–1043 (ILVGSLSAAI…TFSYTPSYAK (289 aa)) is the ABC transmembrane type-1 2 domain. A helical membrane pass occupies residues 756-776 (LVGSLSAAINGAVTPIYSLLF). The Extracellular segment spans residues 777–794 (SQLLGTFSLLDKEQQRSE). A helical membrane pass occupies residues 795–815 (IHSMCLFFVILGCVSIFTQFL). Over 816 to 869 (QGYTFAKSGELLTKRLRKFGFKAMLGQDIGWFDDLRNNPGVLTTRLATDASQVQ) the chain is Cytoplasmic. The next 2 helical transmembrane spans lie at 870–890 (GATG…IAAL) and 891–911 (LIAF…FPFL). Topologically, residues 912 to 979 (ALSGAVQTKM…SYKTAVRKAN (68 aa)) are cytoplasmic. A helical transmembrane segment spans residues 980-1000 (IYGLCFAFSQGIAFLANSAAY). The Extracellular segment spans residues 1001–1011 (RYGGYLIAYEG). A helical membrane pass occupies residues 1012–1032 (LGFSHVFRVVSSVALSATAVG). Residues 1033-1321 (RTFSYTPSYA…KLVITGAPIS (289 aa)) lie on the Cytoplasmic side of the membrane. Residues 1078–1316 (IDFIDCKFTY…KGAYYKLVIT (239 aa)) form the ABC transporter 2 domain. 1113-1120 (GSSGCGKS) provides a ligand contact to ATP. Phosphoserine is present on S1321.

Belongs to the ABC transporter superfamily. ABCB family. Multidrug resistance exporter (TC 3.A.1.201) subfamily. As to quaternary structure, interacts with HAX1. Interacts with the adapter protein complex 2 (AP-2) throught AP2A2 or AP2A1; this interaction regulates cell membrane expression of ABCB11 through its internalization in a clathrin-dependent manner and its subsequent degradation. Post-translationally, ubiquitinated; short-chain ubiquitination regulates cell-Surface expression of ABCB11. In terms of processing, N-glycosylated. As to expression, expressed predominantly, if not exclusively in the liver, where it was further localized to the canalicular microvilli and to subcanalicular vesicles of the hepatocytes by in situ.

It is found in the apical cell membrane. Its subcellular location is the recycling endosome membrane. The protein localises to the endosome. It localises to the cell membrane. The catalysed reaction is cholate(in) + ATP + H2O = cholate(out) + ADP + phosphate + H(+). It catalyses the reaction taurocholate(in) + ATP + H2O = taurocholate(out) + ADP + phosphate + H(+). The enzyme catalyses glycocholate(in) + ATP + H2O = glycocholate(out) + ADP + phosphate + H(+). It carries out the reaction glycochenodeoxycholate(in) + ATP + H2O = glycochenodeoxycholate(out) + ADP + phosphate + H(+). The catalysed reaction is taurochenodeoxycholate(in) + ATP + H2O = taurochenodeoxycholate(out) + ADP + phosphate + H(+). It catalyses the reaction glycoursodeoxycholate(in) + ATP + H2O = glycoursodeoxycholate(out) + ADP + phosphate + H(+). The enzyme catalyses tauroursodeoxycholate(in) + ATP + H2O = tauroursodeoxycholate(out) + ADP + phosphate + H(+). It carries out the reaction taurodeoxycholate(in) + ATP + H2O = taurodeoxycholate(out) + ADP + phosphate + H(+). The catalysed reaction is pravastatin(in) + ATP + H2O = pravastatin(out) + ADP + phosphate + H(+). Its activity is regulated as follows. The uptake of taurocholate is inhibited by taurolithocholate sulfate with an IC(50) of 52.9 uM. Pravastatin competitively inhibits the transport of taurocholic acid. Cyclosporin A, glibenclamide, rifampicin and troglitazonestrongly competitively inhibit the transport activity of taurocholate. The canalicular transport activity of taurocholate is strongly dependent on canalicular membrane cholesterol content. The uptake of taurocholate is increased by short- and medium-chain fatty acids. Cholesterol increases transport capacity of taurocholate without affecting the affinity for the substrate. Catalyzes the transport of the major hydrophobic bile salts, such as taurine and glycine-conjugated cholic acid across the canalicular membrane of hepatocytes in an ATP-dependent manner, therefore participates in hepatic bile acid homeostasis and consequently to lipid homeostasis through regulation of biliary lipid secretion in a bile salts dependent manner. Transports taurine-conjugated bile salts more rapidly than glycine-conjugated bile salts. Also transports non-bile acid compounds, such as pravastatin and fexofenadine in an ATP-dependent manner and may be involved in their biliary excretion. The polypeptide is Bile salt export pump (Rattus norvegicus (Rat)).